A 564-amino-acid chain; its full sequence is Proline--tRNA ligase (564 aa).

This sequence belongs to the class-II aminoacyl-tRNA synthetase family. ProS type 1 subfamily. As to quaternary structure, homodimer.

It is found in the cytoplasm. The catalysed reaction is tRNA(Pro) + L-proline + ATP = L-prolyl-tRNA(Pro) + AMP + diphosphate. Functionally, catalyzes the attachment of proline to tRNA(Pro) in a two-step reaction: proline is first activated by ATP to form Pro-AMP and then transferred to the acceptor end of tRNA(Pro). As ProRS can inadvertently accommodate and process non-cognate amino acids such as alanine and cysteine, to avoid such errors it has two additional distinct editing activities against alanine. One activity is designated as 'pretransfer' editing and involves the tRNA(Pro)-independent hydrolysis of activated Ala-AMP. The other activity is designated 'posttransfer' editing and involves deacylation of mischarged Ala-tRNA(Pro). The misacylated Cys-tRNA(Pro) is not edited by ProRS. This chain is Proline--tRNA ligase, found in Xanthomonas axonopodis pv. citri (strain 306).